We begin with the raw amino-acid sequence, 131 residues long: Lymphocyte antigen 6C1 (131 aa).

The first 26 residues, 1–26, serve as a signal peptide directing secretion; the sequence is MDTSHTTKSCVLILLVALLCAERAQG. The region spanning 27 to 115 is the UPAR/Ly6 domain; it reads LQCYECYGVP…PTAGSTWTMA (89 aa). 5 disulfides stabilise this stretch: cysteine 29–cysteine 53, cysteine 32–cysteine 41, cysteine 46–cysteine 74, cysteine 78–cysteine 95, and cysteine 96–cysteine 101. Glycine 109 carries the GPI-anchor amidated glycine lipid modification. A propeptide spans 110–131 (removed in mature form); sequence STWTMAGVLLFSLSSVVLQTLL.

The protein resides in the cell membrane. This is Lymphocyte antigen 6C1 (Ly6c1) from Mus musculus (Mouse).